The chain runs to 307 residues: Myeloid-associated differentiation marker homolog (307 aa).

MARVEL domains lie at 15-148 and 153-304; these read TLKS…AKPG and YMAT…RLIF. The next 8 membrane-spanning stretches (helical) occupy residues 19–39, 51–71, 85–105, 123–143, 156–176, 190–210, 228–248, and 278–298; these read PVGI…SLVV, LCMF…IVEF, FPIT…VIYP, IVAI…VSLT, TTPG…FVFI, WCLA…ILCV, YALL…IFSF, and MVAV…DLVY.

Belongs to the MAL family.

The protein resides in the membrane. The polypeptide is Myeloid-associated differentiation marker homolog (myadm) (Xenopus laevis (African clawed frog)).